A 235-amino-acid polypeptide reads, in one-letter code: Transmembrane protein 176A (235 aa).

The residue at position 38 (S38) is a Phosphoserine. Transmembrane regions (helical) follow at residues 55-75 (VASW…GGFF), 86-106 (SGAA…AFIY), 113-133 (YWAL…IAAL), and 193-213 (AMLL…LWLY).

This sequence belongs to the TMEM176 family. As to quaternary structure, interacts with MCOLN2.

It localises to the membrane. The sequence is that of Transmembrane protein 176A (TMEM176A) from Homo sapiens (Human).